The primary structure comprises 65 residues: KappaPI-actitoxin-Ael3a (65 aa).

The region spanning 5–55 is the BPTI/Kunitz inhibitor domain; that stretch reads CLLPKKQGFCRARFPRFYYNSSTRRCEMFYYGGCGGNANNFNTLEECEKVC. 3 disulfide bridges follow: Cys-5-Cys-55, Cys-14-Cys-38, and Cys-30-Cys-51.

The protein belongs to the venom Kunitz-type family. Sea anemone type 2 potassium channel toxin subfamily.

It localises to the secreted. It is found in the nematocyst. Its function is as follows. Dual-function toxin that inhibits both serine proteases (trypsin Kd=124 nM) and voltage-gated potassium channels rKv1.1/KCNA1 (IC(50)=0.9 nM). The activity on the Kv1.1/KCNA1 is selective and reversible. The toxin presumably acts by blocking the channel pore in the open state. This is KappaPI-actitoxin-Ael3a from Anthopleura elegantissima (Green aggregating anemone).